We begin with the raw amino-acid sequence, 821 residues long: BDNF/NT-3 growth factors receptor (821 aa).

An N-terminal signal peptide occupies residues 1–31; it reads MSPWLKWHGPAMARLWGLCLLVLGFWRASLA. 2 cysteine pairs are disulfide-bonded: Cys32/Cys38 and Cys36/Cys45. Positions 32–61 constitute an LRRNT domain; it reads CPTSCKCSSARIWCTEPSPGIVAFPRLEPN. Topologically, residues 32–429 are extracellular; that stretch reads CPTSCKCSSA…DVADQSNREH (398 aa). Residues Asn67, Asn95, and Asn121 are each glycosylated (N-linked (GlcNAc...) asparagine). LRR repeat units follow at residues 92 to 113 and 116 to 137; these read GLRN…AFLK and NLRH…HFRH. The LRRCT domain occupies 148 to 196; it reads NPFTCSCDIMWLKTLQETKSSPDTQDLYCLNESSKNMPLANLQIPNCGL. Cystine bridges form between Cys152–Cys176 and Cys154–Cys194. 9 N-linked (GlcNAc...) asparagine glycosylation sites follow: Asn178, Asn205, Asn241, Asn254, Asn280, Asn325, Asn338, Asn350, and Asn411. 2 Ig-like C2-type domains span residues 197-282 and 301-365; these read PSAR…VNLT and WCIP…MAKN. A disulfide bridge connects residues Cys218 and Cys266. Cys302 and Cys345 are disulfide-bonded. A helical membrane pass occupies residues 430–453; that stretch reads LSVYAVVVIASVVGFCLLVMLLLL. The interval 454–465 is interaction with MAPK8IP3/JIP3; it reads KLARHSKFGMKG. Residues 454–821 lie on the Cytoplasmic side of the membrane; that stretch reads KLARHSKFGM…ASPVYLDILG (368 aa). Residues 474–497 form a disordered region; it reads DDSASPLHHISNGSNTPSSSEGGP. Polar residues predominate over residues 484 to 494; the sequence is SNGSNTPSSSE. Position 515 is a phosphotyrosine (Tyr515). One can recognise a Protein kinase domain in the interval 537–806; that stretch reads IVLKRELGEG…KNIKSIHTLL (270 aa). Residues 543–551 and Lys571 contribute to the ATP site; that span reads LGEGAFGKV. Catalysis depends on Asp675, which acts as the Proton acceptor. A phosphotyrosine; by autocatalysis mark is found at Tyr701, Tyr705, Tyr706, and Tyr816.

This sequence belongs to the protein kinase superfamily. Tyr protein kinase family. Insulin receptor subfamily. In terms of assembly, exists in a dynamic equilibrium between monomeric (low affinity) and dimeric (high affinity) structures. Interacts (phosphorylated upon activation by BDNF) with SHC1; mediates SHC1 phosphorylation and activation. Interacts (phosphorylated upon activation by BDNF) with PLCG1 and/or PLCG2; mediates PLCG1 phosphorylation and activation. Interacts with SH2B1 and SH2B2. Interacts with NGFR; may regulate the ligand specificity of the receptor. Interacts with SORCS2; this interaction is important for normal targeting to post-synaptic densities in response to high-frequency stimulation. Interacts (phosphorylated upon ligand-binding) with SH2D1A; regulates NTRK2. Interacts with SQSTM1 and KIDINS220. Interacts (phosphorylated upon ligand-binding) with FRS2; activates the MAPK signaling pathway. Interacts with APPL1. Interacts with MAPK8IP3/JIP3 and KLC1; interaction with KLC1 is mediated by MAPK8IP3/JIP3. Interacts with SORL1; this interaction facilitates NTRK2 trafficking between synaptic plasma membranes, postsynaptic densities and cell soma, hence positively regulates BDNF signaling. Interacts with SLITRK2. Post-translationally, phosphorylated. Undergoes ligand-mediated autophosphorylation that is required for interaction with SHC1 and PLCG1 and other downstream effectors. Some isoforms are not phosphorylated. Ubiquitinated. Undergoes polyubiquitination upon activation; regulated by NGFR. Ubiquitination regulates the internalization of the receptor. As to expression, expressed in the brain, in neurons (at protein level). Detected in hippocampus (at protein level). Widely expressed in the central and peripheral nervous system. The different forms are differentially expressed in various cell types. Isoform GP95-TRKB is specifically expressed in glial cells.

The protein localises to the cell membrane. It localises to the endosome membrane. It is found in the early endosome membrane. The protein resides in the cell projection. Its subcellular location is the axon. The protein localises to the dendrite. It localises to the cytoplasm. It is found in the perinuclear region. The protein resides in the postsynaptic density. It carries out the reaction L-tyrosyl-[protein] + ATP = O-phospho-L-tyrosyl-[protein] + ADP + H(+). With respect to regulation, the formation of active receptors dimers able to fully transduce the ligand-mediated signal, may be negatively regulated by the formation of inactive heterodimers with the non-catalytic isoforms. The neuronal activity and the influx of calcium positively regulate the kinase activity and the internalization of the receptor which are both important for active signaling. Regulated by NGFR that may control the internalization of the receptor. NGFR may also stimulate the activation by BDNF compared to NTF3 and NTF4. SH2D1A inhibits the autophosphorylation of the receptor, and alters the recruitment and activation of downstream effectors and signaling cascades. Its function is as follows. Receptor tyrosine kinase involved in the development and the maturation of the central and the peripheral nervous systems through regulation of neuron survival, proliferation, migration, differentiation, and synapse formation and plasticity. Receptor for BDNF/brain-derived neurotrophic factor and NTF4/neurotrophin-4. Alternatively can also bind NTF3/neurotrophin-3 which is less efficient in activating the receptor but regulates neuron survival through NTRK2. Upon ligand-binding, undergoes homodimerization, autophosphorylation and activation. Recruits, phosphorylates and/or activates several downstream effectors including SHC1, FRS2, SH2B1, SH2B2 and PLCG1 that regulate distinct overlapping signaling cascades. Through SHC1, FRS2, SH2B1, SH2B2 activates the GRB2-Ras-MAPK cascade that regulates for instance neuronal differentiation including neurite outgrowth. Through the same effectors controls the Ras-PI3 kinase-AKT1 signaling cascade that mainly regulates growth and survival. Through PLCG1 and the downstream protein kinase C-regulated pathways controls synaptic plasticity. Thereby, plays a role in learning and memory by regulating both short term synaptic function and long-term potentiation. PLCG1 also leads to NF-Kappa-B activation and the transcription of genes involved in cell survival. Hence, it is able to suppress anoikis, the apoptosis resulting from loss of cell-matrix interactions. Isoform GP95-TRKB may also play a role in neutrophin-dependent calcium signaling in glial cells and mediate communication between neurons and glia. The sequence is that of BDNF/NT-3 growth factors receptor from Mus musculus (Mouse).